We begin with the raw amino-acid sequence, 401 residues long: MAEVLRWLRLDLGQSGGLAWERLDWRLALTVLALAGLGLVMVGSASVSIAEGATGDPLHYLYRQAVFLAVALMAAVACLHLSLDQFYRGGPVLLVLGFFLLLVVLIPGVGREVNGATRWIPLGLINLQVAEVARVCFIIYLAGYCVRRHAELPNTSSAFAVPLAVFSLAAVLLLAQPDFGTALVLMATALGLLFLAGASLWRIGVLGLLLAGAAWLLIVGSPYRWQRLTTFTDPWADPFNAGFQLTQSLIAIGRGEWFGVGLGASVQKLFYLPEAHTDFLFAVLAEELGLLGVVVVVALFTYLAWRGMQIGLASLRADRPFGAYLAWGLTISIGLQAFINMAVTMGLLPTKGLTLPLMSYGGSSLIMTGIALALLLRVDYEARLAAQQPRPRKRPSGRVRP.

Over 1-26 the chain is Cytoplasmic; that stretch reads MAEVLRWLRLDLGQSGGLAWERLDWR. A helical transmembrane segment spans residues 27–47; the sequence is LALTVLALAGLGLVMVGSASV. Residues 48–65 are Periplasmic-facing; it reads SIAEGATGDPLHYLYRQA. The helical transmembrane segment at 66–86 threads the bilayer; that stretch reads VFLAVALMAAVACLHLSLDQF. The Cytoplasmic segment spans residues 87-88; that stretch reads YR. Residues 89 to 109 form a helical membrane-spanning segment; that stretch reads GGPVLLVLGFFLLLVVLIPGV. Residues 110–118 lie on the Periplasmic side of the membrane; the sequence is GREVNGATR. The chain crosses the membrane as a helical span at residues 119 to 139; it reads WIPLGLINLQVAEVARVCFII. Topologically, residues 140-154 are cytoplasmic; the sequence is YLAGYCVRRHAELPN. A helical membrane pass occupies residues 155–175; it reads TSSAFAVPLAVFSLAAVLLLA. Residues 176 to 180 lie on the Periplasmic side of the membrane; it reads QPDFG. Residues 181–201 traverse the membrane as a helical segment; it reads TALVLMATALGLLFLAGASLW. A topological domain (cytoplasmic) is located at residue Arg-202. Residues 203–223 traverse the membrane as a helical segment; sequence IGVLGLLLAGAAWLLIVGSPY. Over 224–278 the chain is Periplasmic; the sequence is RWQRLTTFTDPWADPFNAGFQLTQSLIAIGRGEWFGVGLGASVQKLFYLPEAHTD. The chain crosses the membrane as a helical span at residues 279–299; that stretch reads FLFAVLAEELGLLGVVVVVAL. Residues 300–322 are Cytoplasmic-facing; that stretch reads FTYLAWRGMQIGLASLRADRPFG. A helical transmembrane segment spans residues 323 to 343; sequence AYLAWGLTISIGLQAFINMAV. The Periplasmic portion of the chain corresponds to 344 to 354; the sequence is TMGLLPTKGLT. The helical transmembrane segment at 355 to 375 threads the bilayer; sequence LPLMSYGGSSLIMTGIALALL. At 376–401 the chain is on the cytoplasmic side; that stretch reads LRVDYEARLAAQQPRPRKRPSGRVRP.

It belongs to the SEDS family. FtsW subfamily.

It localises to the cell inner membrane. It catalyses the reaction [GlcNAc-(1-&gt;4)-Mur2Ac(oyl-L-Ala-gamma-D-Glu-L-Lys-D-Ala-D-Ala)](n)-di-trans,octa-cis-undecaprenyl diphosphate + beta-D-GlcNAc-(1-&gt;4)-Mur2Ac(oyl-L-Ala-gamma-D-Glu-L-Lys-D-Ala-D-Ala)-di-trans,octa-cis-undecaprenyl diphosphate = [GlcNAc-(1-&gt;4)-Mur2Ac(oyl-L-Ala-gamma-D-Glu-L-Lys-D-Ala-D-Ala)](n+1)-di-trans,octa-cis-undecaprenyl diphosphate + di-trans,octa-cis-undecaprenyl diphosphate + H(+). The protein operates within cell wall biogenesis; peptidoglycan biosynthesis. In terms of biological role, peptidoglycan polymerase that is essential for cell division. The sequence is that of Probable peptidoglycan glycosyltransferase FtsW from Alkalilimnicola ehrlichii (strain ATCC BAA-1101 / DSM 17681 / MLHE-1).